We begin with the raw amino-acid sequence, 842 residues long: Alpha-glucan phosphorylase, H isozyme (842 aa).

Position 688 is an N6-(pyridoxal phosphate)lysine (K688).

Belongs to the glycogen phosphorylase family. Pyridoxal 5'-phosphate is required as a cofactor.

It localises to the cytoplasm. It catalyses the reaction [(1-&gt;4)-alpha-D-glucosyl](n) + phosphate = [(1-&gt;4)-alpha-D-glucosyl](n-1) + alpha-D-glucose 1-phosphate. In terms of biological role, phosphorylase is an important allosteric enzyme in carbohydrate metabolism. Enzymes from different sources differ in their regulatory mechanisms and in their natural substrates. However, all known phosphorylases share catalytic and structural properties. The H isoform exhibits higher affinity for branched polyglucans such as soluble starch or glycogen. In Vicia faba (Broad bean), this protein is Alpha-glucan phosphorylase, H isozyme.